We begin with the raw amino-acid sequence, 425 residues long: Putative dipeptidase MGYG_00085 (425 aa).

A signal peptide spans 1–31 (MAPERRSRLSETAGLFVSLLALTSIVPVQAV). Zn(2+)-binding residues include histidine 56, aspartate 58, and glutamate 168. The cysteines at positions 107 and 197 are disulfide-linked. Histidine 195 contributes to the substrate binding site. Residues histidine 239 and histidine 260 each contribute to the Zn(2+) site. Arginine 271 and aspartate 331 together coordinate substrate. N-linked (GlcNAc...) asparagine glycosylation occurs at asparagine 403.

This sequence belongs to the metallo-dependent hydrolases superfamily. Peptidase M19 family. Zn(2+) serves as cofactor.

It catalyses the reaction an L-aminoacyl-L-amino acid + H2O = 2 an L-alpha-amino acid. Hydrolyzes a wide range of dipeptides. In Arthroderma gypseum (strain ATCC MYA-4604 / CBS 118893) (Microsporum gypseum), this protein is Putative dipeptidase MGYG_00085.